Consider the following 202-residue polypeptide: CASP-like protein 2B1 (202 aa).

Residues 1–29 are Cytoplasmic-facing; sequence MSYLGVGVSPGNVPVYHGSNLKVIDKRVR. The chain crosses the membrane as a helical span at residues 30–50; the sequence is LAELVLRCLICGLGVLAAVLV. The Extracellular portion of the chain corresponds to 51–72; the sequence is GTDTQVKEIFSIQKKARFTDMK. Residues 73-93 traverse the membrane as a helical segment; the sequence is ALVFLVIANGIAAAYSLLQGV. Topologically, residues 94–109 are cytoplasmic; that stretch reads RCVVGMVRGSALFSKP. The chain crosses the membrane as a helical span at residues 110–130; sequence LAWAIFSGDQMMAYLTVAAVA. The Extracellular portion of the chain corresponds to 131–164; sequence AAAQSAVFAKLGQPELQWMKICNMYGKFCNQVGE. The chain crosses the membrane as a helical span at residues 165–185; the sequence is GIASALLVSVSMVVLSCISAF. Over 186–202 the chain is Cytoplasmic; it reads SLFRLYGANKGKDCTRW.

This sequence belongs to the Casparian strip membrane proteins (CASP) family. Homodimer and heterodimers.

The protein resides in the cell membrane. The protein is CASP-like protein 2B1 of Ricinus communis (Castor bean).